Reading from the N-terminus, the 840-residue chain is DNA mismatch repair protein MutS (840 aa).

601–608 (GPNMSGKS) is an ATP binding site.

This sequence belongs to the DNA mismatch repair MutS family.

In terms of biological role, this protein is involved in the repair of mismatches in DNA. It is possible that it carries out the mismatch recognition step. This protein has a weak ATPase activity. In Lactococcus lactis subsp. cremoris (strain MG1363), this protein is DNA mismatch repair protein MutS.